An 829-amino-acid chain; its full sequence is Ent-cassa-12,15-diene synthase (829 aa).

The segment at 1 to 50 is disordered; that stretch reads MMLLGSPSSGGYGGKFAGASPAGGTTTMAPSAKQPSSRAPPPGITGGRND. A compositionally biased stretch (polar residues) spans 23–37; that stretch reads GGTTTMAPSAKQPSS. Mg(2+) contacts are provided by D576, D580, N720, and E728. The DDXXD motif motif lies at 576–580; sequence DDLFD.

It belongs to the terpene synthase family. Requires Mg(2+) as cofactor. As to expression, expressed in roots and stems.

It carries out the reaction ent-copalyl diphosphate = ent-cassa-12,15-diene + diphosphate. In terms of biological role, involved in phytocassane phytoalexins biosynthesis. Catalyzes the conversion of ent-copalyl diphosphate to the phytoalexin precursor ent-cassa-12,15-diene. This is Ent-cassa-12,15-diene synthase (KSL7) from Oryza sativa subsp. japonica (Rice).